A 250-amino-acid polypeptide reads, in one-letter code: Precorrin-4 C(11)-methyltransferase (250 aa).

It belongs to the precorrin methyltransferase family.

The enzyme catalyses precorrin-4 + S-adenosyl-L-methionine = precorrin-5 + S-adenosyl-L-homocysteine. The protein operates within cofactor biosynthesis; adenosylcobalamin biosynthesis; cob(II)yrinate a,c-diamide from precorrin-2 (aerobic route): step 4/10. Catalyzes the methylation of C-11 in precorrin-4 to form precorrin-5. This chain is Precorrin-4 C(11)-methyltransferase (cobM), found in Pseudomonas aeruginosa (strain ATCC 15692 / DSM 22644 / CIP 104116 / JCM 14847 / LMG 12228 / 1C / PRS 101 / PAO1).